A 306-amino-acid polypeptide reads, in one-letter code: Isoaspartyl peptidase/L-asparaginase (306 aa).

T174 (nucleophile) is an active-site residue. Substrate is bound by residues 202–205 (RIGD) and 224–227 (TGKG).

Belongs to the Ntn-hydrolase family. As to quaternary structure, heterotetramer of two alpha and two beta chains arranged as a dimer of alpha/beta heterodimers. Post-translationally, cleaved into an alpha and beta chain by autocatalysis; this activates the enzyme. The N-terminal residue of the beta subunit is responsible for the nucleophile hydrolase activity. In terms of tissue distribution, developing seeds.

It catalyses the reaction Cleavage of a beta-linked Asp residue from the N-terminus of a polypeptide.. Functionally, degrades proteins damaged by L-isoaspartyl residue formation (also known as beta-Asp residues). Also has L-asparaginase activity, which is used to liberate stored nitrogen during seed development. The sequence is that of Isoaspartyl peptidase/L-asparaginase from Lupinus arboreus (Tree lupine).